Reading from the N-terminus, the 112-residue chain is Transmembrane protein 14 homolog (112 aa).

The helical transmembrane segment at 3–23 (VDWFGYVYAATVAAGGIMGYA) threads the bilayer.

Belongs to the TMEM14 family.

It is found in the membrane. The sequence is that of Transmembrane protein 14 homolog from Drosophila melanogaster (Fruit fly).